Reading from the N-terminus, the 359-residue chain is Alanine racemase (359 aa).

Catalysis depends on Lys-35, which acts as the Proton acceptor; specific for D-alanine. Position 35 is an N6-(pyridoxal phosphate)lysine (Lys-35). Arg-131 is a substrate binding site. Tyr-253 functions as the Proton acceptor; specific for L-alanine in the catalytic mechanism. Residue Met-301 coordinates substrate.

This sequence belongs to the alanine racemase family. It depends on pyridoxal 5'-phosphate as a cofactor.

It catalyses the reaction L-alanine = D-alanine. It participates in amino-acid biosynthesis; D-alanine biosynthesis; D-alanine from L-alanine: step 1/1. In terms of biological role, catalyzes the interconversion of L-alanine and D-alanine. May also act on other amino acids. The polypeptide is Alanine racemase (alr) (Laribacter hongkongensis (strain HLHK9)).